The sequence spans 550 residues: Selinene synthase (550 aa).

Positions 314, 318, 450, and 458 each coordinate Mg(2+). The DDXXD motif signature appears at 314-318 (DDIYD).

The protein belongs to the terpene synthase family. It depends on Mg(2+) as a cofactor. Mn(2+) is required as a cofactor.

The catalysed reaction is (2E,6E)-farnesyl diphosphate = (+)-beta-selinene + diphosphate. The enzyme catalyses (2E,6E)-farnesyl diphosphate = alpha-selinene + diphosphate. Its pathway is secondary metabolite biosynthesis; terpenoid biosynthesis. In terms of biological role, sesquiterpene synthase that catalyzes the formation of alpha- and beta-selinene from trans,trans-farnesyl diphosphate (FPP). Also produces some nerolidol. The polypeptide is Selinene synthase (SES) (Ocimum basilicum (Sweet basil)).